The primary structure comprises 606 residues: ATP-dependent RNA helicase DBP6 (606 aa).

Disordered regions lie at residues 1-88 and 101-124; these read MFSQ…PEVD and KFKQ…EDAN. Composition is skewed to acidic residues over residues 35 to 71, 78 to 88, and 109 to 124; these read DESS…EDED, NMEIDSQPEVD, and ETIE…EDAN. The Q motif motif lies at 169–197; that stretch reads KAFTDFKSSSFMIKNLEKMGFTEAFSVQI. The region spanning 211–393 is the Helicase ATP-binding domain; that stretch reads KLKPDRVGDI…SLKFYNPRLI (183 aa). 224 to 231 provides a ligand contact to ATP; it reads ASTGSGKT. Positions 331–334 match the DEAD box motif; the sequence is DEAD. One can recognise a Helicase C-terminal domain in the interval 430–585; the sequence is ILTKFLISTN…NVDLNVKELI (156 aa).

Belongs to the DEAD box helicase family. DDX51/DBP6 subfamily. As to quaternary structure, associated with pre-ribosomal particles.

It is found in the nucleus. It localises to the nucleolus. It carries out the reaction ATP + H2O = ADP + phosphate + H(+). Its function is as follows. ATP-binding RNA helicase involved in the biogenesis of 60S ribosomal subunits and is required for the normal formation of 25S and 5.8S rRNAs. The chain is ATP-dependent RNA helicase DBP6 (DBP6) from Candida albicans (strain SC5314 / ATCC MYA-2876) (Yeast).